Reading from the N-terminus, the 66-residue chain is Large ribosomal subunit protein uL29 (66 aa).

It belongs to the universal ribosomal protein uL29 family.

The polypeptide is Large ribosomal subunit protein uL29 (Bacillus mycoides (strain KBAB4) (Bacillus weihenstephanensis)).